The following is a 116-amino-acid chain: Large ribosomal subunit protein bL19 (116 aa).

It belongs to the bacterial ribosomal protein bL19 family.

In terms of biological role, this protein is located at the 30S-50S ribosomal subunit interface and may play a role in the structure and function of the aminoacyl-tRNA binding site. The chain is Large ribosomal subunit protein bL19 from Clostridioides difficile (strain 630) (Peptoclostridium difficile).